A 308-amino-acid chain; its full sequence is tRNA dimethylallyltransferase (308 aa).

14-21 (GPTASGKT) provides a ligand contact to ATP. 16 to 21 (TASGKT) lines the substrate pocket. Interaction with substrate tRNA regions lie at residues 39–42 (DSAL), 163–167 (QRLSR), and 244–249 (RCVGYR).

Belongs to the IPP transferase family. As to quaternary structure, monomer. Mg(2+) is required as a cofactor.

The enzyme catalyses adenosine(37) in tRNA + dimethylallyl diphosphate = N(6)-dimethylallyladenosine(37) in tRNA + diphosphate. Functionally, catalyzes the transfer of a dimethylallyl group onto the adenine at position 37 in tRNAs that read codons beginning with uridine, leading to the formation of N6-(dimethylallyl)adenosine (i(6)A). In Shewanella loihica (strain ATCC BAA-1088 / PV-4), this protein is tRNA dimethylallyltransferase.